Here is a 271-residue protein sequence, read N- to C-terminus: tRNA pseudouridine synthase A (271 aa).

Asp-52 serves as the catalytic Nucleophile. Tyr-110 lines the substrate pocket.

It belongs to the tRNA pseudouridine synthase TruA family. In terms of assembly, homodimer.

It carries out the reaction uridine(38/39/40) in tRNA = pseudouridine(38/39/40) in tRNA. Functionally, formation of pseudouridine at positions 38, 39 and 40 in the anticodon stem and loop of transfer RNAs. This chain is tRNA pseudouridine synthase A, found in Burkholderia mallei (strain NCTC 10247).